The sequence spans 448 residues: UDP-N-acetylmuramoylalanine--D-glutamate ligase (448 aa).

Lys17, Ser18, Thr38, Arg39, and Gly78 together coordinate UDP-N-acetyl-alpha-D-muramoyl-L-alanine. An ATP-binding site is contributed by 116-122 (GSNAKST). The ADP site is built by Ala119, Lys120, Ser121, and Thr122. Residues Asn143 and His188 each coordinate UDP-N-acetyl-alpha-D-muramoyl-L-alanine. Residues Asn278, Arg309, Asp324, and Lys326 each coordinate ADP.

This sequence belongs to the MurCDEF family.

The protein resides in the cytoplasm. It carries out the reaction UDP-N-acetyl-alpha-D-muramoyl-L-alanine + D-glutamate + ATP = UDP-N-acetyl-alpha-D-muramoyl-L-alanyl-D-glutamate + ADP + phosphate + H(+). The protein operates within cell wall biogenesis; peptidoglycan biosynthesis. Its function is as follows. Involved in cell wall formation. Catalyzes the addition of D-glutamate to the peptidoglycan precursor UDP-N-acetylmuramoyl-L-alanine (UMA). The chain is UDP-N-acetylmuramoylalanine--D-glutamate ligase from Pseudomonas aeruginosa (strain ATCC 15692 / DSM 22644 / CIP 104116 / JCM 14847 / LMG 12228 / 1C / PRS 101 / PAO1).